The primary structure comprises 325 residues: uncharacterized protein (325 aa).

Disordered regions lie at residues 32-65 (LSTPVYRKKSRRSVSQSRPTSIIEPPKRSIVPPI) and 99-152 (GDSL…ASSG). Residues 153 to 291 (LVPSLNRLRI…LFTGVRDGYY (139 aa)) enclose the Globin domain.

This is an uncharacterized protein from Caenorhabditis elegans.